The primary structure comprises 405 residues: Cysteine desulfurase IscS (405 aa).

Residues 75-76, N156, Q184, and 204-206 contribute to the pyridoxal 5'-phosphate site; these read AT and SAH. The residue at position 207 (K207) is an N6-(pyridoxal phosphate)lysine. Residue T244 coordinates pyridoxal 5'-phosphate. Catalysis depends on C329, which acts as the Cysteine persulfide intermediate. C329 serves as a coordination point for [2Fe-2S] cluster.

This sequence belongs to the class-V pyridoxal-phosphate-dependent aminotransferase family. NifS/IscS subfamily. Homodimer. Forms a heterotetramer with IscU, interacts with other sulfur acceptors. Pyridoxal 5'-phosphate is required as a cofactor.

Its subcellular location is the cytoplasm. The catalysed reaction is (sulfur carrier)-H + L-cysteine = (sulfur carrier)-SH + L-alanine. The protein operates within cofactor biosynthesis; iron-sulfur cluster biosynthesis. Functionally, master enzyme that delivers sulfur to a number of partners involved in Fe-S cluster assembly, tRNA modification or cofactor biosynthesis. Catalyzes the removal of elemental sulfur atoms from cysteine to produce alanine. Functions as a sulfur delivery protein for Fe-S cluster synthesis onto IscU, an Fe-S scaffold assembly protein, as well as other S acceptor proteins. This Acinetobacter baumannii (strain AB307-0294) protein is Cysteine desulfurase IscS.